Here is a 155-residue protein sequence, read N- to C-terminus: Microsomal glutathione S-transferase 1 (155 aa).

Topologically, residues 3–9 (DLKQLMD) are lumenal. The helical transmembrane segment at 10–33 (NEVLMAFTSYATIILAKMMFLSSA) threads the bilayer. Residues 34 to 62 (TAFQRLTNKVFANPEDCAGFGKGENAKKF) lie on the Cytoplasmic side of the membrane. Arginine 38 serves as a coordination point for glutathione. An N6-acetyllysine mark is found at lysine 42, lysine 55, and lysine 60. A helical membrane pass occupies residues 63–96 (LRTDEKVERVRRAHLNDLENIVPFLGIGLLYSLS). Residues arginine 73, arginine 74, histidine 76, and glutamate 81 each coordinate glutathione. Tyrosine 93 is subject to 3'-nitrotyrosine; in vitro. Residues 97–99 (GPD) lie on the Lumenal side of the membrane. The helical transmembrane segment at 100 to 123 (LSTALIHFRIFVGARIYHTIAYLT) threads the bilayer. Tyrosine 121 contributes to the glutathione binding site. The Cytoplasmic portion of the chain corresponds to 124–128 (PLPQP). The chain crosses the membrane as a helical span at residues 129 to 148 (NRGLAFFVGYGVTLSMAYRL). The Lumenal portion of the chain corresponds to 149 to 155 (LRSRLYL).

The protein belongs to the MAPEG family. In terms of assembly, homotrimer; The trimer binds only one molecule of glutathione. In terms of processing, in vitro, peroxynitrite induces nitration at Tyr-93 which activates the enzyme. In terms of tissue distribution, highest in the liver, followed by kidney and testis and much lower in seminal vesicles, spleen, lung and brain.

Its subcellular location is the endoplasmic reticulum membrane. It localises to the mitochondrion outer membrane. It catalyses the reaction RX + glutathione = an S-substituted glutathione + a halide anion + H(+). With respect to regulation, in vitro, can be activated by reagents that attack Cys-50 sulfhydryl, such as N-ethylmaleimide and via nitration of Tyr-93 by peroxynitrite. Conjugation of reduced glutathione to a wide number of exogenous and endogenous hydrophobic electrophiles. This Rattus norvegicus (Rat) protein is Microsomal glutathione S-transferase 1 (Mgst1).